The sequence spans 123 residues: Large ribosomal subunit protein uL24 (123 aa).

It belongs to the universal ribosomal protein uL24 family. In terms of assembly, part of the 50S ribosomal subunit.

One of two assembly initiator proteins, it binds directly to the 5'-end of the 23S rRNA, where it nucleates assembly of the 50S subunit. Its function is as follows. Located at the polypeptide exit tunnel on the outside of the subunit. The protein is Large ribosomal subunit protein uL24 of Pyrobaculum islandicum (strain DSM 4184 / JCM 9189 / GEO3).